The following is a 488-amino-acid chain: 3-octaprenyl-4-hydroxybenzoate carboxy-lyase (488 aa).

Position 172 (N172) interacts with Mn(2+). Residues 175-177 (IYR), 189-191 (RWL), and 194-195 (RG) each bind prenylated FMN. E238 is a binding site for Mn(2+). D287 functions as the Proton donor in the catalytic mechanism.

Belongs to the UbiD family. In terms of assembly, homohexamer. It depends on prenylated FMN as a cofactor. Mn(2+) is required as a cofactor.

Its subcellular location is the cell membrane. It carries out the reaction a 4-hydroxy-3-(all-trans-polyprenyl)benzoate + H(+) = a 2-(all-trans-polyprenyl)phenol + CO2. The protein operates within cofactor biosynthesis; ubiquinone biosynthesis. Its function is as follows. Catalyzes the decarboxylation of 3-octaprenyl-4-hydroxy benzoate to 2-octaprenylphenol, an intermediate step in ubiquinone biosynthesis. This Pseudomonas fluorescens (strain ATCC BAA-477 / NRRL B-23932 / Pf-5) protein is 3-octaprenyl-4-hydroxybenzoate carboxy-lyase.